Here is a 2300-residue protein sequence, read N- to C-terminus: Protein Ycf2 (2300 aa).

1642 to 1649 contributes to the ATP binding site; that stretch reads GSIGTGRS.

The protein belongs to the Ycf2 family.

The protein localises to the plastid. It is found in the chloroplast stroma. Its function is as follows. Probable ATPase of unknown function. Its presence in a non-photosynthetic plant (Epifagus virginiana) and experiments in tobacco indicate that it has an essential function which is probably not related to photosynthesis. This chain is Protein Ycf2, found in Vitis vinifera (Grape).